Reading from the N-terminus, the 308-residue chain is Aspartate carbamoyltransferase catalytic subunit (308 aa).

2 residues coordinate carbamoyl phosphate: arginine 49 and threonine 50. Position 77 (lysine 77) interacts with L-aspartate. Arginine 99, histidine 127, and glutamine 130 together coordinate carbamoyl phosphate. Arginine 160 and arginine 211 together coordinate L-aspartate. Residues alanine 252 and proline 253 each coordinate carbamoyl phosphate.

Belongs to the aspartate/ornithine carbamoyltransferase superfamily. ATCase family. Heterododecamer (2C3:3R2) of six catalytic PyrB chains organized as two trimers (C3), and six regulatory PyrI chains organized as three dimers (R2).

It catalyses the reaction carbamoyl phosphate + L-aspartate = N-carbamoyl-L-aspartate + phosphate + H(+). Its pathway is pyrimidine metabolism; UMP biosynthesis via de novo pathway; (S)-dihydroorotate from bicarbonate: step 2/3. In terms of biological role, catalyzes the condensation of carbamoyl phosphate and aspartate to form carbamoyl aspartate and inorganic phosphate, the committed step in the de novo pyrimidine nucleotide biosynthesis pathway. The chain is Aspartate carbamoyltransferase catalytic subunit from Bacillus caldolyticus.